Reading from the N-terminus, the 169-residue chain is Large ribosomal subunit protein uL5 (169 aa).

Belongs to the universal ribosomal protein uL5 family. As to quaternary structure, part of the 50S ribosomal subunit; contacts the 5S rRNA and probably tRNA. Forms a bridge to the 30S subunit in the 70S ribosome.

In terms of biological role, this is one of the proteins that bind and probably mediate the attachment of the 5S RNA into the large ribosomal subunit, where it forms part of the central protuberance. In the 70S ribosome it contacts protein S13 of the 30S subunit (bridge B1b), connecting the 2 subunits; this bridge is implicated in subunit movement. May contact the P site tRNA; the 5S rRNA and some of its associated proteins might help stabilize positioning of ribosome-bound tRNAs. The chain is Large ribosomal subunit protein uL5 from Nanoarchaeum equitans (strain Kin4-M).